The sequence spans 785 residues: Pre-rRNA-processing protein TSR1 homolog (785 aa).

A disordered region spans residues methionine 1–arginine 59. Basic residues predominate over residues glycine 9 to arginine 25. Over residues threonine 26–valine 40 the composition is skewed to basic and acidic residues. The 161-residue stretch at alanine 83–lysine 243 folds into the Bms1-type G domain. The disordered stretch occupies residues proline 307 to phenylalanine 426. Acidic residues predominate over residues leucine 376 to methionine 409.

The protein belongs to the TRAFAC class translation factor GTPase superfamily. Bms1-like GTPase family. TSR1 subfamily.

It localises to the nucleus. The protein resides in the nucleolus. Its function is as follows. Required during maturation of the 40S ribosomal subunit in the nucleolus. The protein is Pre-rRNA-processing protein TSR1 homolog (tag-151) of Caenorhabditis elegans.